The sequence spans 154 residues: Low molecular weight protein-tyrosine-phosphatase PtpA (154 aa).

Cys-8 (nucleophile) is an active-site residue. The active site involves Arg-14. Catalysis depends on Asp-120, which acts as the Proton donor.

The protein belongs to the low molecular weight phosphotyrosine protein phosphatase family. In terms of assembly, interacts with host CORO1A. Post-translationally, phosphorylations at Tyr-122 and Tyr-123 are essential for phosphatase activity.

Its subcellular location is the secreted. The catalysed reaction is O-phospho-L-tyrosyl-[protein] + H2O = L-tyrosyl-[protein] + phosphate. In terms of biological role, secreted tyrosine phosphatase that plays a critical role during infection as a bacterial effector protein that counteracts host defenses. Required for intramacrophage survival. The polypeptide is Low molecular weight protein-tyrosine-phosphatase PtpA (ptpA) (Staphylococcus aureus (strain MRSA252)).